We begin with the raw amino-acid sequence, 466 residues long: MIQTKSETITREFTTSAKNRGSYWITTFGCQMNKADSERMAGILQAMGYQKAKTELCADLVLYNTCTIRDNAEQKVYSYLGRQAIRKKSSPHLKLVVAGCVAQQEGESLLRRVPELDLVMGPQHANRLEDLLNQVDNGQQVVATEEHLILEDLTAARRDSNICAWVNVIYGCNERCTYCVVPSVRGKEQSREPKAIKLEIEDLAKKGFKEVTLLGQNIDAYGRDLPGISSSGRRENTLTDLLYFIHDINGINRIRFATSHPRYFTTRLIEACAELPKLCEHFHIPFQSGDNEVLKRMGRGYTIEKYRRIIDKIRELMPNSSISSDVIVAFPGEDESQFQNTLKIIREIGFDQVNTAAYSQRPNTPAASWAEQLPESVKIDRLKELNLLVEQTAKDKNTRYHNQIVEVLAEGINPKNQEQLMGRTRTNRLTFFSKIGPKKYSYNPGDLVKVKISEIRAFSLTGSPIQ.

One can recognise an MTTase N-terminal domain in the interval 21–137; sequence GSYWITTFGC…LEDLLNQVDN (117 aa). Residues Cys-30, Cys-66, Cys-100, Cys-172, Cys-176, and Cys-179 each coordinate [4Fe-4S] cluster. In terms of domain architecture, Radical SAM core spans 158–395; it reads RDSNICAWVN…NLLVEQTAKD (238 aa). The TRAM domain maps to 398–466; it reads TRYHNQIVEV…AFSLTGSPIQ (69 aa).

The protein belongs to the methylthiotransferase family. MiaB subfamily. Monomer. [4Fe-4S] cluster is required as a cofactor.

The protein localises to the cytoplasm. The enzyme catalyses N(6)-dimethylallyladenosine(37) in tRNA + (sulfur carrier)-SH + AH2 + 2 S-adenosyl-L-methionine = 2-methylsulfanyl-N(6)-dimethylallyladenosine(37) in tRNA + (sulfur carrier)-H + 5'-deoxyadenosine + L-methionine + A + S-adenosyl-L-homocysteine + 2 H(+). Catalyzes the methylthiolation of N6-(dimethylallyl)adenosine (i(6)A), leading to the formation of 2-methylthio-N6-(dimethylallyl)adenosine (ms(2)i(6)A) at position 37 in tRNAs that read codons beginning with uridine. The sequence is that of tRNA-2-methylthio-N(6)-dimethylallyladenosine synthase from Prochlorococcus marinus (strain SARG / CCMP1375 / SS120).